The chain runs to 292 residues: GTP cyclohydrolase FolE2 (292 aa).

This sequence belongs to the GTP cyclohydrolase IV family.

The catalysed reaction is GTP + H2O = 7,8-dihydroneopterin 3'-triphosphate + formate + H(+). It functions in the pathway cofactor biosynthesis; 7,8-dihydroneopterin triphosphate biosynthesis; 7,8-dihydroneopterin triphosphate from GTP: step 1/1. Its function is as follows. Converts GTP to 7,8-dihydroneopterin triphosphate. The protein is GTP cyclohydrolase FolE2 of Staphylococcus aureus (strain Newman).